The following is a 418-amino-acid chain: Glutamyl-tRNA reductase (418 aa).

Substrate is bound by residues 49-52 (TCNR), S109, 114-116 (EPQ), and Q120. The active-site Nucleophile is C50. 189-194 (GAGETI) is an NADP(+) binding site.

This sequence belongs to the glutamyl-tRNA reductase family. Homodimer.

The enzyme catalyses (S)-4-amino-5-oxopentanoate + tRNA(Glu) + NADP(+) = L-glutamyl-tRNA(Glu) + NADPH + H(+). Its pathway is porphyrin-containing compound metabolism; protoporphyrin-IX biosynthesis; 5-aminolevulinate from L-glutamyl-tRNA(Glu): step 1/2. In terms of biological role, catalyzes the NADPH-dependent reduction of glutamyl-tRNA(Glu) to glutamate 1-semialdehyde (GSA). The sequence is that of Glutamyl-tRNA reductase from Shigella dysenteriae serotype 1 (strain Sd197).